Here is a 117-residue protein sequence, read N- to C-terminus: Minor capsid protein p17 (117 aa).

An N-linked (GlcNAc...) asparagine; by host glycan is attached at Asn12. The helical transmembrane segment at 39–59 threads the bilayer; the sequence is AILLGILILLVIILIIVAIVY. 2 N-linked (GlcNAc...) asparagine; by host glycosylation sites follow: Asn61 and Asn97.

Belongs to the asfivirus minor capsid protein p17 family. In terms of assembly, interacts with the minor capsid protein M1249L and with the hexon capsid protein p72 capsomers; these interactions form a rigid zipper structure that stabilizes the capsomers. Interacts with host STING1.

The protein resides in the virion membrane. The protein localises to the host endoplasmic reticulum membrane. Its subcellular location is the host Golgi apparatus membrane. Functionally, together with the penton and the other minor capsid proteins (M1249L, p49), forms a complicated network immediately below the outer capsid shell, stabilizing the whole capsid. Three copies of p17 encircle each p72 capsomer in the inner capsid shell, anchoring p72 capsomers on the inner membrane. Required for the assembly of the capsid and icosahedral morphogenesis. Additionally, inhibits the host cGAS-STING pathway through its interaction with STING1 and subsequent interference of the recruitment of downstream components TBK1 and IKBKE. The sequence is that of Minor capsid protein p17 from African swine fever virus (strain Badajoz 1971 Vero-adapted) (Ba71V).